The following is a 409-amino-acid chain: Methylthioribose-1-phosphate isomerase (409 aa).

Aspartate 277 (proton donor) is an active-site residue.

The protein belongs to the eIF-2B alpha/beta/delta subunits family. MtnA subfamily.

It localises to the cytoplasm. The protein localises to the nucleus. The catalysed reaction is 5-(methylsulfanyl)-alpha-D-ribose 1-phosphate = 5-(methylsulfanyl)-D-ribulose 1-phosphate. It functions in the pathway amino-acid biosynthesis; L-methionine biosynthesis via salvage pathway; L-methionine from S-methyl-5-thio-alpha-D-ribose 1-phosphate: step 1/6. Catalyzes the interconversion of methylthioribose-1-phosphate (MTR-1-P) into methylthioribulose-1-phosphate (MTRu-1-P). This chain is Methylthioribose-1-phosphate isomerase, found in Scheffersomyces stipitis (strain ATCC 58785 / CBS 6054 / NBRC 10063 / NRRL Y-11545) (Yeast).